The chain runs to 364 residues: Anhydro-N-acetylmuramic acid kinase (364 aa).

12-19 contacts ATP; the sequence is GTSHDAID.

It belongs to the anhydro-N-acetylmuramic acid kinase family.

It catalyses the reaction 1,6-anhydro-N-acetyl-beta-muramate + ATP + H2O = N-acetyl-D-muramate 6-phosphate + ADP + H(+). It participates in amino-sugar metabolism; 1,6-anhydro-N-acetylmuramate degradation. Its pathway is cell wall biogenesis; peptidoglycan recycling. In terms of biological role, catalyzes the specific phosphorylation of 1,6-anhydro-N-acetylmuramic acid (anhMurNAc) with the simultaneous cleavage of the 1,6-anhydro ring, generating MurNAc-6-P. Is required for the utilization of anhMurNAc either imported from the medium or derived from its own cell wall murein, and thus plays a role in cell wall recycling. The protein is Anhydro-N-acetylmuramic acid kinase of Gamma-proteobacterium EBAC31A08.